The sequence spans 171 residues: MGQILLILLLQLIYVPVLTLRTIMLVKGKTVIAGLFGTLETLIYIFALGIVFQDLTTVGMIVYAVGFGLGILLGGFVERKLAIGYNMIQVHTKEYPAELIQQMRDNGYGVTHYQGQGRDGVRYRLDVLAARTRMKELRELVEKHEPKAFLVAFDPIDFKGGYMMKGLRRPK.

Helical transmembrane passes span 4–24 (ILLI…RTIM), 32–52 (IAGL…GIVF), and 57–77 (TVGM…GGFV).

Belongs to the UPF0316 family.

The protein localises to the cell membrane. This is UPF0316 protein EAT1b_0871 from Exiguobacterium sp. (strain ATCC BAA-1283 / AT1b).